The following is a 336-amino-acid chain: Zinc finger protein GFI1 homolog pag-3 (336 aa).

5 consecutive C2H2-type zinc fingers follow at residues 126–148, 154–176, 182–204, 210–232, and 238–260; these read FHCQ…QQVH, FECK…LLIH, YPCE…TYIH, HKCT…TRKH, and FACD…RESH. Residues 253–290 form a disordered region; the sequence is RRRHRESHHPGHPEECVSASQISSDLSPKGYMTPPTSN.

In terms of assembly, may interact with transcription factor unc-3. As to expression, expressed in the BDU neurons, the touch neurons, the VA, VB and VC motor neurons, two AVF interneurons and unidentified neurons of the retrovesicular ganglion (at protein level).

The protein localises to the nucleus. It localises to the cell projection. It is found in the axon. Its subcellular location is the perikaryon. In terms of biological role, transcription factor. Plays a role in the determination of neuroblast cell fate and neuronal differentiation. Negatively modulates expression of several components of dense-core vesicles (DCVs), thereby, in a DCV membrane protein ida-1-dependent manner, regulating neurosecretion. Negatively modulates the transcription of its own gene, the mechanosensory gene mec-3, and also other touch neuron-specific genes in the BDU neurons; required for coordinated movement. Required to determine the identity of BDU sensory neurons in concert with transcription factor unc-86, regulating expression of a number of genes, including transcription factors ceh-14 and ahr-1, neuropeptides flp-10, nlp-1 and nlp-15, and tyramine receptor-encoding ser-2. Acts in concert with non-canonical WNT signaling to negatively modulate transcription of mec-3 gene in BDU neurons. May act in concert with transcription factor unc-3 in motor neuron fate determination. May play a role programmed cell death. The chain is Zinc finger protein GFI1 homolog pag-3 from Caenorhabditis elegans.